Reading from the N-terminus, the 715-residue chain is DNA mismatch repair protein MLH3 (715 aa).

The protein belongs to the DNA mismatch repair MutL/HexB family. Heterodimer of MLH1 and MLH3, called MutLbeta, which is involved in correction of a specific subset of IDLs when associated with MutSbeta. Forms a ternary complex with a SGS1-TOP3 heterodimer during meiosis.

It is found in the nucleus. Functionally, involved in DNA mismatch repair (MMR), correcting insertion-deletion loops (IDLs) resulting from DNA replication, DNA damage or from recombination events between non-identical sequences during meiosis. Component of the MutLbeta heterodimer, which probably forms a ternary complex with the MutSbeta heterodimer that initially recognizes the DNA mismatches. This complex is thought to be responsible for directing the downstream MMR events, including strand discrimination, excision, and resynthesis. Plays a major role in promoting meiotic crossing-over and is involved in maintaining the genetic stability of simple sequence repeats by correction of frameshift intermediates. This Saccharomyces cerevisiae (strain ATCC 204508 / S288c) (Baker's yeast) protein is DNA mismatch repair protein MLH3 (MLH3).